The following is a 188-amino-acid chain: Anaphase-promoting complex subunit 10 (188 aa).

A DOC domain is found at 4-187 (NSNINSNSRL…SPEVSMFQTL (184 aa)).

This sequence belongs to the APC10 family. The APC/C is composed of at least 13 subunits that stay tightly associated throughout the cell cycle: anapc1, anapc2, anapc3, anapc4, anapc5, anapc6, anapc7, anapc8, anapc10, anapc11, cdc20, cdc26 and cdh1.

The protein resides in the nucleus. The protein operates within protein modification; protein ubiquitination. Functionally, component of the anaphase promoting complex/cyclosome (APC/C), a cell cycle-regulated E3 ubiquitin-protein ligase complex that controls progression through mitosis and the G1 phase of the cell cycle. The polypeptide is Anaphase-promoting complex subunit 10 (anapc10) (Dictyostelium discoideum (Social amoeba)).